Consider the following 146-residue polypeptide: Hemoglobin cathodic subunit beta (146 aa).

The region spanning 2-146 is the Globin domain; it reads QWSSSERSTI…VVSALSRQYF (145 aa). Residues histidine 63 and histidine 92 each contribute to the heme b site.

It belongs to the globin family. As to quaternary structure, heterotetramer of two alpha chains and two beta chains. As to expression, red blood cells.

Involved in oxygen transport from the gills to the various peripheral tissues. The protein is Hemoglobin cathodic subunit beta of Conger conger (Conger eel).